Consider the following 75-residue polypeptide: MIGDILLFGTLLMNAGAVLNFKLKKKDTQGFGEESREPSTGDNIREFLLSLRYFRIFIALWNIFMMFCMIVLFGS.

Positions 1 to 17 (MIGDILLFGTLLMNAGA) are cleaved as a signal peptide. Residues 18-53 (VLNFKLKKKDTQGFGEESREPSTGDNIREFLLSLRY) are Extracellular-facing. The helical transmembrane segment at 54 to 74 (FRIFIALWNIFMMFCMIVLFG) threads the bilayer. Position 75 (serine 75) is a topological domain, cytoplasmic.

This sequence belongs to the SMIM7 family.

The protein localises to the membrane. This chain is Small integral membrane protein 7 (SMIM7), found in Homo sapiens (Human).